Reading from the N-terminus, the 1169-residue chain is ATP-dependent helicase/deoxyribonuclease subunit B (1169 aa).

The region spanning 1-296 (MTLRIVSGRS…QHVEANFANM (296 aa)) is the UvrD-like helicase ATP-binding domain. Residue 8-15 (GRSGTGKS) coordinates ATP. The 307-residue stretch at 276 to 582 (YYTQRFQSED…EFSRIPPTLD (307 aa)) folds into the UvrD-like helicase C-terminal domain. [4Fe-4S] cluster contacts are provided by Cys804, Cys1129, Cys1132, and Cys1138.

This sequence belongs to the helicase family. AddB/RexB type 1 subfamily. In terms of assembly, heterodimer of AddA and AddB. Requires Mg(2+) as cofactor. [4Fe-4S] cluster is required as a cofactor.

In terms of biological role, the heterodimer acts as both an ATP-dependent DNA helicase and an ATP-dependent, dual-direction single-stranded exonuclease. Recognizes the chi site generating a DNA molecule suitable for the initiation of homologous recombination. The AddB subunit has 5' -&gt; 3' nuclease activity but not helicase activity. In Lysinibacillus sphaericus (strain C3-41), this protein is ATP-dependent helicase/deoxyribonuclease subunit B.